The chain runs to 368 residues: Histidinol-phosphate aminotransferase (368 aa).

An N6-(pyridoxal phosphate)lysine modification is found at lysine 224.

The protein belongs to the class-II pyridoxal-phosphate-dependent aminotransferase family. Histidinol-phosphate aminotransferase subfamily. Homodimer. Pyridoxal 5'-phosphate serves as cofactor.

It catalyses the reaction L-histidinol phosphate + 2-oxoglutarate = 3-(imidazol-4-yl)-2-oxopropyl phosphate + L-glutamate. It functions in the pathway amino-acid biosynthesis; L-histidine biosynthesis; L-histidine from 5-phospho-alpha-D-ribose 1-diphosphate: step 7/9. The chain is Histidinol-phosphate aminotransferase from Agrobacterium fabrum (strain C58 / ATCC 33970) (Agrobacterium tumefaciens (strain C58)).